Here is a 47-residue protein sequence, read N- to C-terminus: Protein YqgG (47 aa).

This Escherichia coli (strain K12) protein is Protein YqgG.